The sequence spans 190 residues: Segregation and condensation protein B (190 aa).

It belongs to the ScpB family. In terms of assembly, homodimer. Homodimerization may be required to stabilize the binding of ScpA to the Smc head domains. Component of a cohesin-like complex composed of ScpA, ScpB and the Smc homodimer, in which ScpA and ScpB bind to the head domain of Smc. The presence of the three proteins is required for the association of the complex with DNA.

The protein resides in the cytoplasm. Its function is as follows. Participates in chromosomal partition during cell division. May act via the formation of a condensin-like complex containing Smc and ScpA that pull DNA away from mid-cell into both cell halves. The polypeptide is Segregation and condensation protein B (Bacillus cereus (strain ZK / E33L)).